The sequence spans 599 residues: Transcription factor COE4 (599 aa).

The segment at 64-67 is interaction with DNA; it reads RKSN. A C5-type zinc finger spans residues 152-171; sequence CRVLLTHEIMCSRCCDRKSC. 2 interaction with DNA regions span residues 198-205 and 237-240; these read NCLKNAGN and NNSK. An IPT/TIG domain is found at 256 to 339; sequence PCIKAISPGE…KGAPGRFVYT (84 aa). 2 disordered regions span residues 449-473 and 556-586; these read GYAR…SSYG and VLRP…TDKF. Residues 464-473 show a composition bias toward low complexity; it reads SPGSQQSSYG.

It belongs to the COE family. Forms either a homodimer or a heterodimer with a related family member. Expressed in the olfactory epithelium, including in both neuronal and basal cell layers. Absent in the vomeronasal organ. Absent from NK cells and CD8(+) T cells.

The protein localises to the nucleus. Transcription factor. Positively modulates transcription, perhaps less strongly than other early B cell factor/EBF family proteins. Binds an EBF1/Olf-1 consensus site in vitro. In Mus musculus (Mouse), this protein is Transcription factor COE4 (Ebf4).